Here is a 576-residue protein sequence, read N- to C-terminus: Arginine--tRNA ligase (576 aa).

The 'HIGH' region motif lies at 126–136 (ANPTGPMHIGH).

This sequence belongs to the class-I aminoacyl-tRNA synthetase family. Monomer.

It is found in the cytoplasm. The enzyme catalyses tRNA(Arg) + L-arginine + ATP = L-arginyl-tRNA(Arg) + AMP + diphosphate. The protein is Arginine--tRNA ligase of Rickettsia typhi (strain ATCC VR-144 / Wilmington).